Consider the following 258-residue polypeptide: Deoxyribose-phosphate aldolase (258 aa).

Asp-101 serves as the catalytic Proton donor/acceptor. Lys-166 (schiff-base intermediate with acetaldehyde) is an active-site residue. Lys-200 serves as the catalytic Proton donor/acceptor.

Belongs to the DeoC/FbaB aldolase family. DeoC type 2 subfamily.

The protein resides in the cytoplasm. It carries out the reaction 2-deoxy-D-ribose 5-phosphate = D-glyceraldehyde 3-phosphate + acetaldehyde. It participates in carbohydrate degradation; 2-deoxy-D-ribose 1-phosphate degradation; D-glyceraldehyde 3-phosphate and acetaldehyde from 2-deoxy-alpha-D-ribose 1-phosphate: step 2/2. Catalyzes a reversible aldol reaction between acetaldehyde and D-glyceraldehyde 3-phosphate to generate 2-deoxy-D-ribose 5-phosphate. The sequence is that of Deoxyribose-phosphate aldolase from Haemophilus ducreyi (strain 35000HP / ATCC 700724).